Consider the following 98-residue polypeptide: Integration host factor subunit beta (98 aa).

This sequence belongs to the bacterial histone-like protein family. As to quaternary structure, heterodimer of an alpha and a beta chain.

This protein is one of the two subunits of integration host factor, a specific DNA-binding protein that functions in genetic recombination as well as in transcriptional and translational control. The protein is Integration host factor subunit beta of Teredinibacter turnerae (strain ATCC 39867 / T7901).